Consider the following 475-residue polypeptide: MAFGKSHRDPYATSLGHLIEKATFAGVQTEDWGQFMHICDIINTTQDGPKDAVKALKKRISKNYNHKEIQLSLSLIDMCMQNCGPSFQSLIVKKEFVKDTLVKLLNPRYTLPLETQNRILSFIKMWSQGFPGGVDVSEVKEVYLDLLKKGVQFPPLDGEPETKQEAGQISPSRPTSVPTAPALSSIIAPKNPTISLVPEQIGKLHSELDMVKMNVKVMTAILMENTPGSENHEDIELLRKLYKTGREMQERIMDLLVVVENEDVTVELIQVNEDLNNAILGYERFTRNQQRLLEQKRNPTEANQTSSEPSAPSCDLLNLGPVAPVPVSSEGPLNSVNAQLSGLNVSSQSPVITNNLYPSLQPQMDLLASEDTEVPTLFPQRTSQNLASSHTYDNFPDHSSSVLLQPVSLHTAPAAPSSQRLPPLPSNHPVLKNSALQPPSYYEVMEFDPLAPTTEAIYEEIDASHKKGAQSHSEC.

One can recognise a VHS domain in the interval 22-154; it reads ATFAGVQTED…DLLKKGVQFP (133 aa). The interval 155-175 is disordered; that stretch reads PLDGEPETKQEAGQISPSRPT. Positions 165–175 are enriched in polar residues; sequence EAGQISPSRPT. A Phosphoserine modification is found at serine 170. The region spanning 199-287 is the GAT domain; sequence EQIGKLHSEL…AILGYERFTR (89 aa). Residues 296 to 317 are disordered; sequence KRNPTEANQTSSEPSAPSCDLL. Residues 300–310 are compositionally biased toward polar residues; that stretch reads TEANQTSSEPS. A Phosphoserine modification is found at serine 313. The tract at residues 392–395 is interaction with GRB2; it reads YDNF. The SH3-binding motif lies at 421-425; it reads LPPLP. Residues 442-445 are interaction with PIK3R1; that stretch reads YEVM. A Phosphotyrosine modification is found at tyrosine 458. The short motif at 458–461 is the SH2-binding element; that stretch reads YEEI.

The protein belongs to the TOM1 family. In terms of assembly, interacts with the SH2 and SH3 domains of FYN when phosphorylated. Also interacts with GRB2 and PIK3R1 when phosphorylated. Interacts with LYN. Phosphorylated on tyrosines by FYN and LYN.

The protein resides in the golgi apparatus. The protein localises to the golgi stack. It localises to the endosome membrane. Its subcellular location is the cytoplasm. It is found in the membrane. Its function is as follows. Probable adapter protein involved in signaling pathways. Interacts with the SH2 and SH3 domains of various signaling proteins when it is phosphorylated. May promote FYN activation, possibly by disrupting intramolecular SH3-dependent interactions. The sequence is that of TOM1-like protein 1 (Tom1l1) from Rattus norvegicus (Rat).